We begin with the raw amino-acid sequence, 533 residues long: MTKAPVAPVVLVILDGWGYCEETRGNAIAAAKTPVMESLWTAYPHTLIHTSGKAVGLPEGQMGNSEVGHLNIGAGRVVPQELVRISDAVEDGSILSNSALVKICQEVRNRNGKLHLVGLCSEGGVHSHITHLFGLLDLAKEQRISEVCIHAITDGRDTAPTDGINAISALEDYINHVGIGRIVTVSGRYYAMDRDRRWDRVQRAYDVMTQDGVGDGRKAVDVLQASYAEGVNDEFIVPVRIAPGTVEPGDGVIFFNFRPDRSRQLTQAFVSPEFTGFARQQIKPLSFVTFTQYDSDLSVSVAFEPQNLTNILGEVIANQGLNQFRTAETEKYAHVTYFFNGGLEEPFAGEDRELVSSPMVATYDKAPAMSATAVTDTAIAAIQKGIYSLIVINYANPDMVGHTGQIEPTIKAIETVDRCLGRLLEGVSKAGGTTIITADHGNAEYMLDEAGNSWTAHTTNPVPLILVEGEKVKIPGYGTNVELRSDGKLADIAPTILDILQLPQPPEMTGRSLLQPAEYEVELSRTPIPVGLN.

Mn(2+) is bound by residues Asp15 and Ser65. Ser65 functions as the Phosphoserine intermediate in the catalytic mechanism. Residues His126, 156–157 (RD), Arg188, Arg194, 258–261 (RPDR), and Lys331 each bind substrate. 5 residues coordinate Mn(2+): Asp398, His402, Asp439, His440, and His457.

The protein belongs to the BPG-independent phosphoglycerate mutase family. In terms of assembly, monomer. Requires Mn(2+) as cofactor.

It catalyses the reaction (2R)-2-phosphoglycerate = (2R)-3-phosphoglycerate. The protein operates within carbohydrate degradation; glycolysis; pyruvate from D-glyceraldehyde 3-phosphate: step 3/5. Catalyzes the interconversion of 2-phosphoglycerate and 3-phosphoglycerate. The polypeptide is 2,3-bisphosphoglycerate-independent phosphoglycerate mutase (Nostoc sp. (strain PCC 7120 / SAG 25.82 / UTEX 2576)).